The following is a 126-amino-acid chain: 14 kDa phosphohistidine phosphatase (126 aa).

Lys-22 is a substrate binding site. His-54 serves as the catalytic Proton acceptor. Residue 95-97 (SMG) coordinates substrate.

The protein belongs to the janus family. In terms of assembly, monomer.

It is found in the cytoplasm. The enzyme catalyses N(pros)-phospho-L-histidyl-[protein] + H2O = L-histidyl-[protein] + phosphate. The catalysed reaction is N(tele)-phospho-L-histidyl-[protein] + H2O = L-histidyl-[protein] + phosphate. In terms of biological role, exhibits phosphohistidine phosphatase activity. In Sus scrofa (Pig), this protein is 14 kDa phosphohistidine phosphatase (PHPT1).